A 299-amino-acid polypeptide reads, in one-letter code: uncharacterized protein (299 aa).

The interval M1 to K44 is disordered. Residue L55–A79 participates in NADP(+) binding. Residue S188 participates in substrate binding. The active-site Proton acceptor is Y201.

The protein belongs to the short-chain dehydrogenases/reductases (SDR) family.

This is an uncharacterized protein from Bacillus subtilis (strain 168).